We begin with the raw amino-acid sequence, 419 residues long: Serine hydroxymethyltransferase (419 aa).

(6S)-5,6,7,8-tetrahydrofolate-binding positions include L121 and 125 to 127; that span reads GHL. At K230 the chain carries N6-(pyridoxal phosphate)lysine.

This sequence belongs to the SHMT family. Homodimer. It depends on pyridoxal 5'-phosphate as a cofactor.

Its subcellular location is the cytoplasm. It carries out the reaction (6R)-5,10-methylene-5,6,7,8-tetrahydrofolate + glycine + H2O = (6S)-5,6,7,8-tetrahydrofolate + L-serine. The protein operates within one-carbon metabolism; tetrahydrofolate interconversion. It participates in amino-acid biosynthesis; glycine biosynthesis; glycine from L-serine: step 1/1. Catalyzes the reversible interconversion of serine and glycine with tetrahydrofolate (THF) serving as the one-carbon carrier. This reaction serves as the major source of one-carbon groups required for the biosynthesis of purines, thymidylate, methionine, and other important biomolecules. Also exhibits THF-independent aldolase activity toward beta-hydroxyamino acids, producing glycine and aldehydes, via a retro-aldol mechanism. The sequence is that of Serine hydroxymethyltransferase from Vesicomyosocius okutanii subsp. Calyptogena okutanii (strain HA).